A 152-amino-acid polypeptide reads, in one-letter code: ESAT-6 secretion machinery protein EssA (152 aa).

Residues 1–114 (MLMNSVIALT…PYIQNKQEKK (114 aa)) are Cytoplasmic-facing. A helical membrane pass occupies residues 115-135 (IFPYILMSVGAFLTLGFVIFS). At 136–152 (IHKGRRTKNESARKSNI) the chain is on the extracellular side.

The protein belongs to the EssA family.

The protein resides in the cell membrane. Its function is as follows. Component of the ESAT-6 secretion system (Ess). Required for the secretion of EsxA. This Staphylococcus aureus (strain MRSA252) protein is ESAT-6 secretion machinery protein EssA.